We begin with the raw amino-acid sequence, 666 residues long: ATP-dependent zinc metalloprotease FtsH (666 aa).

The Cytoplasmic portion of the chain corresponds to 1–6 (MKSETG). Residues 7–27 (YMGFVVVLVFMVLLALQLATL) form a helical membrane-spanning segment. The Periplasmic segment spans residues 28–116 (SAPATQIAYS…TRYRGADDDT (89 aa)). Residues 117–137 (WIGTLASWIVPIAVFALVWNL) form a helical membrane-spanning segment. Residues 138–666 (MLRRPRGGLQ…ADNADHSVPQ (529 aa)) are Cytoplasmic-facing. 210–217 (GAPGTGKT) is an ATP binding site. His432 lines the Zn(2+) pocket. The active site involves Glu433. Zn(2+) contacts are provided by His436 and Asp509. The segment at 612–666 (NDEPTPEPGARDPGGDAAKRSGIGAAPAKPPAEVGSAELRDPARKADNADHSVPQ) is disordered. Composition is skewed to basic and acidic residues over residues 620 to 630 (GARDPGGDAAK) and 649 to 666 (ELRD…SVPQ).

It in the central section; belongs to the AAA ATPase family. The protein in the C-terminal section; belongs to the peptidase M41 family. Homohexamer. Zn(2+) is required as a cofactor.

Its subcellular location is the cell inner membrane. In terms of biological role, acts as a processive, ATP-dependent zinc metallopeptidase for both cytoplasmic and membrane proteins. Plays a role in the quality control of integral membrane proteins. The protein is ATP-dependent zinc metalloprotease FtsH of Burkholderia pseudomallei (strain 1710b).